We begin with the raw amino-acid sequence, 609 residues long: Dihydroxy-acid dehydratase (609 aa).

A Mg(2+)-binding site is contributed by aspartate 81. Residue cysteine 122 coordinates [2Fe-2S] cluster. Mg(2+)-binding residues include aspartate 123 and lysine 124. Position 124 is an N6-carboxylysine (lysine 124). Residue cysteine 195 coordinates [2Fe-2S] cluster. Glutamate 491 serves as a coordination point for Mg(2+). The Proton acceptor role is filled by serine 517.

Belongs to the IlvD/Edd family. Homodimer. [2Fe-2S] cluster serves as cofactor. It depends on Mg(2+) as a cofactor.

The enzyme catalyses (2R)-2,3-dihydroxy-3-methylbutanoate = 3-methyl-2-oxobutanoate + H2O. The catalysed reaction is (2R,3R)-2,3-dihydroxy-3-methylpentanoate = (S)-3-methyl-2-oxopentanoate + H2O. The protein operates within amino-acid biosynthesis; L-isoleucine biosynthesis; L-isoleucine from 2-oxobutanoate: step 3/4. It participates in amino-acid biosynthesis; L-valine biosynthesis; L-valine from pyruvate: step 3/4. Functionally, functions in the biosynthesis of branched-chain amino acids. Catalyzes the dehydration of (2R,3R)-2,3-dihydroxy-3-methylpentanoate (2,3-dihydroxy-3-methylvalerate) into 2-oxo-3-methylpentanoate (2-oxo-3-methylvalerate) and of (2R)-2,3-dihydroxy-3-methylbutanoate (2,3-dihydroxyisovalerate) into 2-oxo-3-methylbutanoate (2-oxoisovalerate), the penultimate precursor to L-isoleucine and L-valine, respectively. The sequence is that of Dihydroxy-acid dehydratase from Acinetobacter baumannii (strain ACICU).